Consider the following 229-residue polypeptide: 1-Cys peroxiredoxin PER1 (229 aa).

Residues 4-173 (LTIGDTVPNL…VLRAVDSLLT (170 aa)) enclose the Thioredoxin domain. Cys46 functions as the Cysteine sulfenic acid (-SOH) intermediate in the catalytic mechanism. Residues 205-228 (RKMFPQGFETADLPSKKGYLRFTK) carry the Bipartite nuclear localization signal motif.

This sequence belongs to the peroxiredoxin family. Prx6 subfamily.

The protein localises to the nucleus. Its subcellular location is the cytoplasm. It catalyses the reaction a hydroperoxide + [thioredoxin]-dithiol = an alcohol + [thioredoxin]-disulfide + H2O. Functionally, thiol-specific peroxidase that catalyzes the reduction of hydrogen peroxide and organic hydroperoxides to water and alcohols, respectively. Seems to contribute to the inhibition of germination during stress. In Zea mays (Maize), this protein is 1-Cys peroxiredoxin PER1 (PER1).